The primary structure comprises 562 residues: MNINVASLLNGNYILLLFVVLALGLCLGKVRLGSVQLGNSIGVLVVSLLLGQQHFAINTEALNLGFMLFIFCVGVEAGPNFFSIFFRDGKNYLMLALVMVGSAMVIAIGLGKLFHWDIGLTAGMLAGSMTSTPVLVGAGDTLRNTITNGPALLAAQDHLSLGYALTYLIGLVSLIFGARYLPKLQHQDLSTSAQQIARERGLDTDSQRKVYLPVIRAYRVGPELVAWADGKNLRELGIYRQTGCYIERIRRNGILANPDGDAVLQVGDEISLVGYPDAHARLDPSFRNGKEVFDRDLLDMRIVTEEIVVKNSNAVNKRLSQLKLTDHGCFLNRVIRSQIEMPIDDSIVLNKGDVLQVSGDARRVKSVAEKIGFISIHSQVTDLLAFCAFFIIGLLIGQITIQFSNFSFGIGNAAGLLMAGIMLGFLRANHPTFGYIPQGALNMVKEFGLMVFMAGVGLSAGAGIGNSLGAVGGQMLIAGLIVSLVPVVICFLFGAYVLRMNRALLFGAIMGARTCAPAMEIISDTARSNIPALGYAGTYAIANVLLTLAGSLIVVLWPGILG.

Helical transmembrane passes span 8-28 (LLNG…LCLG), 37-57 (LGNS…HFAI), 66-86 (FMLF…SIFF), 94-114 (MLAL…GKLF), and 158-178 (HLSL…IFGA). 2 RCK C-terminal domains span residues 202–288 (LDTD…SFRN) and 290–373 (KEVF…KIGF). 5 consecutive transmembrane segments (helical) span residues 383–403 (LLAF…TIQF), 406–426 (FSFG…LGFL), 447–467 (FGLM…IGNS), 475–495 (MLIA…LFGA), and 541–561 (IANV…PGIL).

It belongs to the AAE transporter (TC 2.A.81) family. YbjL subfamily.

The protein resides in the cell membrane. The protein is Putative transport protein Spro_1639 of Serratia proteamaculans (strain 568).